The following is a 180-amino-acid chain: Crossover junction endodeoxyribonuclease RuvC (180 aa).

Residues Asp-7, Glu-66, and Asp-138 contribute to the active site. Mg(2+) contacts are provided by Asp-7, Glu-66, and Asp-138.

It belongs to the RuvC family. Homodimer which binds Holliday junction (HJ) DNA. The HJ becomes 2-fold symmetrical on binding to RuvC with unstacked arms; it has a different conformation from HJ DNA in complex with RuvA. In the full resolvosome a probable DNA-RuvA(4)-RuvB(12)-RuvC(2) complex forms which resolves the HJ. The cofactor is Mg(2+).

It localises to the cytoplasm. It carries out the reaction Endonucleolytic cleavage at a junction such as a reciprocal single-stranded crossover between two homologous DNA duplexes (Holliday junction).. The RuvA-RuvB-RuvC complex processes Holliday junction (HJ) DNA during genetic recombination and DNA repair. Endonuclease that resolves HJ intermediates. Cleaves cruciform DNA by making single-stranded nicks across the HJ at symmetrical positions within the homologous arms, yielding a 5'-phosphate and a 3'-hydroxyl group; requires a central core of homology in the junction. The consensus cleavage sequence is 5'-(A/T)TT(C/G)-3'. Cleavage occurs on the 3'-side of the TT dinucleotide at the point of strand exchange. HJ branch migration catalyzed by RuvA-RuvB allows RuvC to scan DNA until it finds its consensus sequence, where it cleaves and resolves the cruciform DNA. This chain is Crossover junction endodeoxyribonuclease RuvC, found in Burkholderia pseudomallei (strain 668).